We begin with the raw amino-acid sequence, 213 residues long: Regulatory protein RecX (213 aa).

The protein belongs to the RecX family.

It is found in the cytoplasm. In terms of biological role, modulates RecA activity. The polypeptide is Regulatory protein RecX (Clostridium beijerinckii (strain ATCC 51743 / NCIMB 8052) (Clostridium acetobutylicum)).